A 94-amino-acid polypeptide reads, in one-letter code: Small ubiquitin-related modifier 3 (94 aa).

Residue Lys-11 forms a Glycyl lysine isopeptide (Lys-Gly) (interchain with G-Cter in SUMO) linkage. Positions 15 to 92 (DHINLKVAGQ…IDVFQQQTGG (78 aa)) constitute a Ubiquitin-like domain. Residue Gly-92 forms a Glycyl lysine isopeptide (Gly-Lys) (interchain with K-? in acceptor proteins) linkage. Positions 93 to 94 (SC) are excised as a propeptide.

The protein belongs to the ubiquitin family. SUMO subfamily. In terms of assembly, interacts with sae2 and ube2i. Covalently attached to a number of proteins. In terms of processing, polymeric chains can be formed through Lys-11 cross-linking. Cleavage of precursor form by a sentrin-specific protease is necessary for function.

It localises to the cytoplasm. The protein localises to the nucleus. Its subcellular location is the PML body. Its function is as follows. Ubiquitin-like protein which can be covalently attached to target lysines either as a monomer or as a lysine-linked polymer. Does not seem to be involved in protein degradation and may function as an antagonist of ubiquitin in the degradation process. Plays a role in a number of cellular processes such as nuclear transport, DNA replication and repair, mitosis and signal transduction. Covalent attachment to its substrates requires prior activation by the E1 complex sae1-sae2 and linkage to the E2 enzyme ube2i. This Danio rerio (Zebrafish) protein is Small ubiquitin-related modifier 3 (sumo3).